We begin with the raw amino-acid sequence, 73 residues long: RNA-binding protein Hfq (73 aa).

The Sm domain occupies 8–68 (DQFLNQIRKE…ISTFAPQKNV (61 aa)).

Belongs to the Hfq family. As to quaternary structure, homohexamer.

RNA chaperone that binds small regulatory RNA (sRNAs) and mRNAs to facilitate mRNA translational regulation in response to envelope stress, environmental stress and changes in metabolite concentrations. Also binds with high specificity to tRNAs. This Bacillus subtilis (strain 168) protein is RNA-binding protein Hfq.